The sequence spans 139 residues: Tol-Pal system protein TolR (139 aa).

A helical transmembrane segment spans residues 15–35; it reads IVPFLDVLLVLVLIFMATAPI.

This sequence belongs to the ExbD/TolR family. The Tol-Pal system is composed of five core proteins: the inner membrane proteins TolA, TolQ and TolR, the periplasmic protein TolB and the outer membrane protein Pal. They form a network linking the inner and outer membranes and the peptidoglycan layer.

It localises to the cell inner membrane. Its function is as follows. Part of the Tol-Pal system, which plays a role in outer membrane invagination during cell division and is important for maintaining outer membrane integrity. The polypeptide is Tol-Pal system protein TolR (Haemophilus influenzae (strain ATCC 51907 / DSM 11121 / KW20 / Rd)).